The primary structure comprises 388 residues: uncharacterized protein (388 aa).

Belongs to the glycosyltransferase 28 family.

This is an uncharacterized protein from Methanosarcina acetivorans (strain ATCC 35395 / DSM 2834 / JCM 12185 / C2A).